Here is an 874-residue protein sequence, read N- to C-terminus: Leucine--tRNA ligase (874 aa).

Residues 47–57 carry the 'HIGH' region motif; sequence PYPSGKLHMGH. The short motif at 636–640 is the 'KMSKS' region element; the sequence is KMSKS. Lys639 contributes to the ATP binding site.

Belongs to the class-I aminoacyl-tRNA synthetase family.

It localises to the cytoplasm. The enzyme catalyses tRNA(Leu) + L-leucine + ATP = L-leucyl-tRNA(Leu) + AMP + diphosphate. This chain is Leucine--tRNA ligase, found in Acinetobacter baumannii (strain AB0057).